The primary structure comprises 947 residues: Cell adhesion molecule CEACAM5 (947 aa).

A signal peptide spans 1 to 34 (MEASSVLPCKWCTHLQGLLLTASFLTCCHLPTTA). Ig-like V-type domains are found at residues 35–132 (QITI…EIVS), 166–259 (SEGG…VQLY), 270–378 (PLQV…LHVN), 392–498 (RLSI…LQLD), 509–615 (QVKI…LHVN), 642–733 (GESV…VQLQ), and 746–851 (DQLI…VQVH). Residues N57, N103, N110, N207, N224, N341, N461, N472, N578, N698, N709, N816, and N823 are each glycosylated (N-linked (GlcNAc...) asparagine). Residues 859–943 (PFVRVTDTTV…SKSSLPVRLA (85 aa)) form the Ig-like C2-type 1 domain. C878 and C926 are disulfide-bonded.

Belongs to the immunoglobulin superfamily. CEA family. Homodimer.

The protein localises to the cell membrane. It is found in the apical cell membrane. Its subcellular location is the cell surface. In terms of biological role, cell surface glycoprotein that plays a role in cell adhesion, intracellular signaling and tumor progression. Mediates homophilic and heterophilic cell adhesion with other carcinoembryonic antigen-related cell adhesion molecules, such as CEACAM6. Plays a role as an oncogene by promoting tumor progression; induces resistance to anoikis of colorectal carcinoma cells. The chain is Cell adhesion molecule CEACAM5 from Mus musculus (Mouse).